A 192-amino-acid chain; its full sequence is Nucleoside triphosphate pyrophosphatase (192 aa).

Asp-73 serves as the catalytic Proton acceptor.

Belongs to the Maf family. The cofactor is a divalent metal cation.

The protein localises to the cytoplasm. The enzyme catalyses a ribonucleoside 5'-triphosphate + H2O = a ribonucleoside 5'-phosphate + diphosphate + H(+). It carries out the reaction a 2'-deoxyribonucleoside 5'-triphosphate + H2O = a 2'-deoxyribonucleoside 5'-phosphate + diphosphate + H(+). Its function is as follows. Nucleoside triphosphate pyrophosphatase. May have a dual role in cell division arrest and in preventing the incorporation of modified nucleotides into cellular nucleic acids. The polypeptide is Nucleoside triphosphate pyrophosphatase (Ehrlichia ruminantium (strain Gardel)).